The sequence spans 117 residues: Immunoglobulin lambda variable 1-51 (117 aa).

The first 19 residues, 1–19 (MTCSPLLLTLLIHCTGSWA), serve as a signal peptide directing secretion. The residue at position 20 (Gln20) is a Pyrrolidone carboxylic acid. The segment at 20 to 44 (QSVLTQPPSVSAAPGQKVTISCSGS) is framework-1. One can recognise an Ig-like domain in the interval 20–117 (QSVLTQPPSV…CGTWDSSLSA (98 aa)). The cysteines at positions 41 and 108 are disulfide-linked. Residues 45-52 (SSNIGNNY) are complementarity-determining-1. The framework-2 stretch occupies residues 53–69 (VSWYQQLPGTAPKLLIY). The complementarity-determining-2 stretch occupies residues 70–72 (DNN). Positions 73-108 (KRPSGIPDRFSGSKSGTSATLGITGLQTGDEADYYC) are framework-3. The complementarity-determining-3 stretch occupies residues 109–117 (GTWDSSLSA).

Immunoglobulins are composed of two identical heavy chains and two identical light chains; disulfide-linked.

It localises to the secreted. The protein resides in the cell membrane. In terms of biological role, v region of the variable domain of immunoglobulin light chains that participates in the antigen recognition. Immunoglobulins, also known as antibodies, are membrane-bound or secreted glycoproteins produced by B lymphocytes. In the recognition phase of humoral immunity, the membrane-bound immunoglobulins serve as receptors which, upon binding of a specific antigen, trigger the clonal expansion and differentiation of B lymphocytes into immunoglobulins-secreting plasma cells. Secreted immunoglobulins mediate the effector phase of humoral immunity, which results in the elimination of bound antigens. The antigen binding site is formed by the variable domain of one heavy chain, together with that of its associated light chain. Thus, each immunoglobulin has two antigen binding sites with remarkable affinity for a particular antigen. The variable domains are assembled by a process called V-(D)-J rearrangement and can then be subjected to somatic hypermutations which, after exposure to antigen and selection, allow affinity maturation for a particular antigen. The chain is Immunoglobulin lambda variable 1-51 from Homo sapiens (Human).